We begin with the raw amino-acid sequence, 426 residues long: Pyruvate, phosphate dikinase regulatory protein, chloroplastic (426 aa).

The transit peptide at 1-41 (MIGCAKPLAAPLQAWARPPSPAGRRLPPSFCAPDTSPALTR) directs the protein to the chloroplast. Disordered stretches follow at residues 1-76 (MIGC…HLDR) and 94-124 (AALS…DGED). Positions 94-119 (AALSSASVSAPPVIKSPRPEDAAVAA) are enriched in low complexity. 153–160 (HSVNAALG) serves as a coordination point for ADP.

The protein belongs to the pyruvate, phosphate/water dikinase regulatory protein family. PDRP subfamily. In terms of assembly, homodimer at pH 7.5 and homotetramer at pH 8.3. It depends on Mg(2+) as a cofactor. In terms of tissue distribution, leaf mesophyll-cells.

Its subcellular location is the plastid. The protein resides in the chloroplast stroma. It carries out the reaction N(tele)-phospho-L-histidyl/L-threonyl-[pyruvate, phosphate dikinase] + ADP = N(tele)-phospho-L-histidyl/O-phospho-L-threonyl-[pyruvate, phosphate dikinase] + AMP + H(+). It catalyses the reaction N(tele)-phospho-L-histidyl/O-phospho-L-threonyl-[pyruvate, phosphate dikinase] + phosphate + H(+) = N(tele)-phospho-L-histidyl/L-threonyl-[pyruvate, phosphate dikinase] + diphosphate. It participates in photosynthesis; C4 acid pathway. With respect to regulation, regulated by light/dark exposure. Functionally, bifunctional serine/threonine kinase and phosphorylase involved in the dark/light-mediated regulation of PPDK by catalyzing its phosphorylation/dephosphorylation. Dark/light-induced changes in stromal concentrations of the competing ADP and Pi substrates govern the direction of the reaction. In the dark, phosphorylates the catalytic intermediate of PPDK (PPDK-HisP), inactivating it. Light exposure induces the phosphorolysis reaction that reactivates PPDK. Phosphorylates PPDK at both Ser-528 and Thr-527. Can use ADP as a high specificity substrate and GDP as a lower affinity substrate, but has no activity with UDP. This chain is Pyruvate, phosphate dikinase regulatory protein, chloroplastic (PDRP1), found in Zea mays (Maize).